The sequence spans 114 residues: UPF0339 protein PM0519 (114 aa).

2 tandem repeats follow at residues 11-59 (AKDG…NFEV) and 62-110 (AKND…IKDL).

It belongs to the UPF0339 family. Duplicated subfamily.

This is UPF0339 protein PM0519 from Pasteurella multocida (strain Pm70).